Reading from the N-terminus, the 346-residue chain is Cell division protein ZipA (346 aa).

Over 1-6 the chain is Periplasmic; the sequence is MEDLQL. The chain crosses the membrane as a helical span at residues 7 to 27; the sequence is VLFVLGAIAIVAVLVHGFWSI. Residues 28–346 lie on the Cytoplasmic side of the membrane; it reads RRQQPKSLKD…DYLHRIRANA (319 aa). The interval 116–146 is disordered; it reads EPSMAQPDFSLQSPTAKEQHRGPKASRQEPV.

It belongs to the ZipA family. Interacts with FtsZ via their C-terminal domains.

The protein localises to the cell inner membrane. Essential cell division protein that stabilizes the FtsZ protofilaments by cross-linking them and that serves as a cytoplasmic membrane anchor for the Z ring. Also required for the recruitment to the septal ring of downstream cell division proteins. In Shewanella sp. (strain ANA-3), this protein is Cell division protein ZipA.